A 1642-amino-acid polypeptide reads, in one-letter code: DNA-directed RNA polymerase I subunit RPA1 (1642 aa).

Zn(2+)-binding residues include C66, C69, C75, and H78. Residues D565, D567, and D569 each contribute to the Mg(2+) site. Positions 939-951 are bridging helix; that stretch reads PQDFFFHCMAGRE. Residues 1337 to 1428 are disordered; sequence DADKDDDNDL…GNDNDGDDKA (92 aa). Over residues 1340–1350 the composition is skewed to acidic residues; that stretch reads KDDDNDLDNGD. A compositionally biased stretch (basic and acidic residues) spans 1351-1361; sequence EVGRSKAKAND. Composition is skewed to acidic residues over residues 1362-1373 and 1386-1424; these read DDSSDDNDDDDA and KDYD…DNDG. A phosphoserine mark is found at S1364 and S1365.

This sequence belongs to the RNA polymerase beta' chain family. In terms of assembly, component of the RNA polymerase I (Pol I) complex consisting of at least 13 subunits. Phosphorylated.

The protein resides in the nucleus. It is found in the nucleolus. The enzyme catalyses RNA(n) + a ribonucleoside 5'-triphosphate = RNA(n+1) + diphosphate. In terms of biological role, DNA-dependent RNA polymerase catalyzes the transcription of DNA into RNA using the four ribonucleoside triphosphates as substrates. Largest and catalytic core component of RNA polymerase I which synthesizes ribosomal RNA precursors. Forms the polymerase active center together with the second largest subunit. A single stranded DNA template strand of the promoter is positioned within the central active site cleft of Pol I. A bridging helix emanates from RPA1 and crosses the cleft near the catalytic site and is thought to promote translocation of Pol I by acting as a ratchet that moves the RNA-DNA hybrid through the active site by switching from straight to bent conformations at each step of nucleotide addition. The protein is DNA-directed RNA polymerase I subunit RPA1 (RpI1) of Drosophila melanogaster (Fruit fly).